Reading from the N-terminus, the 356-residue chain is Protein disulfide isomerase crld-1 (356 aa).

Positions 1 to 17 (MSRILLLLAVLIGATSQ) are cleaved as a signal peptide. Residues 18-299 (KEVTIKNEKC…DRPFMPIDQQ (282 aa)) are Lumenal-facing. A CXXC motif is present at residues 27 to 30 (CRTC). Cysteines 27 and 30 form a disulfide. N122 carries an N-linked (GlcNAc...) asparagine glycan. An EGF-like 1 domain is found at 150-188 (GLSEKADVCFGKGSCHGDGSREGSGKCKCETGYTGNLCR). Disulfide bonds link C158/C176, C178/C187, C245/C258, C251/C267, and C269/C281. One can recognise an EGF-like 2; calcium-binding domain in the interval 241–282 (DVNECQNESACTKEHEICVNTVGSFKCECKEGYKKDDEQNCQ). The N-linked (GlcNAc...) asparagine glycan is linked to N247. A helical membrane pass occupies residues 300–317 (LKLIAFSSLIIIITFVVW). Topologically, residues 318-321 (HGSP) are cytoplasmic. A helical membrane pass occupies residues 322-341 (VLYVLTGITIVALILVDLYV). Residues 342–356 (NPDTIPDEAKRFLGY) lie on the Lumenal side of the membrane.

This sequence belongs to the CRELD family. In terms of assembly, interacts with unc-29. As to expression, isoforms a: Widely expressed in tissues including body wall muscles, neurons, pharynx, hypodermis, seam cells, intestine and gonad. Isoform b: Widely expressed in tissues including body wall muscles, neurons, pharynx, hypodermis, seam cells, intestine and gonad.

It is found in the endoplasmic reticulum membrane. It localises to the endoplasmic reticulum lumen. It catalyses the reaction Catalyzes the rearrangement of -S-S- bonds in proteins.. Its function is as follows. Protein disulfide isomerase which associates with the unc-29 subunit of levamisole-sensitive nicotinic acetylcholine receptors (L-nAChR) to promote L-nAChR assembly in the endoplasmic reticulum at neuromuscular junctions. Functionally, promotes L-nAChR assembly in the endoplasmic reticulum at neuromuscular junctions. The protein is Protein disulfide isomerase crld-1 of Caenorhabditis elegans.